The following is a 266-amino-acid chain: Beta-lactamase OXA-10 (266 aa).

The signal sequence occupies residues 1–19; the sequence is MKTFAAYVIIACLSSTALA. Cysteines 44 and 51 form a disulfide. Ser-67 functions as the Acyl-ester intermediate in the catalytic mechanism. Lys-70 carries the post-translational modification N6-carboxylysine. A beta-lactam-binding residues include Ser-115, Thr-206, Phe-208, and Arg-250.

Belongs to the class-D beta-lactamase family. In terms of assembly, dimer.

It is found in the periplasm. The enzyme catalyses a beta-lactam + H2O = a substituted beta-amino acid. With respect to regulation, activated, with respect to most beta-lactam substrates, in the presence of 0.05 M sodium bicarbonate. Class D beta-lactamase which confers resistance to the beta-lactam antibiotics, including penicillin, carbenicillin and oxacillin, and also some cephalosporins. Confers weak resistance to some carbapenems, in E.coli strain C600Z1. Acts via hydrolysis of the beta-lactam ring. Has penicillin- and cephalosporin-hydrolyzing activities. The sequence is that of Beta-lactamase OXA-10 from Pseudomonas aeruginosa.